The primary structure comprises 382 residues: Mannitol-1-phosphate 5-dehydrogenase (382 aa).

3 to 14 serves as a coordination point for NAD(+); the sequence is ALHFGAGNIGRG.

The protein belongs to the mannitol dehydrogenase family.

It catalyses the reaction D-mannitol 1-phosphate + NAD(+) = beta-D-fructose 6-phosphate + NADH + H(+). This Tolumonas auensis (strain DSM 9187 / NBRC 110442 / TA 4) protein is Mannitol-1-phosphate 5-dehydrogenase.